Reading from the N-terminus, the 424-residue chain is Histidine--tRNA ligase (424 aa).

It belongs to the class-II aminoacyl-tRNA synthetase family. In terms of assembly, homodimer.

The protein localises to the cytoplasm. It catalyses the reaction tRNA(His) + L-histidine + ATP = L-histidyl-tRNA(His) + AMP + diphosphate + H(+). In Pediococcus pentosaceus (strain ATCC 25745 / CCUG 21536 / LMG 10740 / 183-1w), this protein is Histidine--tRNA ligase.